Here is a 351-residue protein sequence, read N- to C-terminus: MLKNDLFLRALKRQPCSRTPIWVMRQAGRYLPEYRAVREKTDFLTLCKTPELATEVTIQPVELMGVDAAIIFSDILVVNEAMGMNVEIIESKGIKLTPPIRSQADIDKLIVPDIDEKLGYVLDALRMTKRELDNRVPLIGFTGAAWTLFTYAVEGGGSKNYAYAKKMMYREPAMAHALLGKISGVITAYVLKQIEAGADAIQIFDSWASALSEDDYREYALPYIKDTVQAIKAKYPDTPVIVFSKDCNTILSDIADTGCEAMGLGWGIDIGKARAELGDRVALQGNLDPTVLYGTPDRIKAEASKILKSFGQHTEHSGHVFNLGHGILPDMDPENLKLLVEFVKEESAQYH.

Residues 25–29 (RQAGR), Asp74, Tyr151, Ser206, and His325 contribute to the substrate site.

Belongs to the uroporphyrinogen decarboxylase family. In terms of assembly, homodimer.

The protein localises to the cytoplasm. It catalyses the reaction uroporphyrinogen III + 4 H(+) = coproporphyrinogen III + 4 CO2. It participates in porphyrin-containing compound metabolism; protoporphyrin-IX biosynthesis; coproporphyrinogen-III from 5-aminolevulinate: step 4/4. Its function is as follows. Catalyzes the decarboxylation of four acetate groups of uroporphyrinogen-III to yield coproporphyrinogen-III. This is Uroporphyrinogen decarboxylase from Pelodictyon phaeoclathratiforme (strain DSM 5477 / BU-1).